The primary structure comprises 376 residues: Protein insensitive (376 aa).

Positions 50–79 (QVEVENRALRDKVRYLEAKLQQHKDLLSQI) form a coiled coil. The region spanning 258–356 (GPNNTCVPAS…TKCADENKMM (99 aa)) is the BEN domain.

In terms of assembly, homodimer. Interacts (via BEN domain) with Su(H). Interacts with Cp190.

It localises to the nucleus. Its function is as follows. Can act as both a transcriptional repressor and corepressor. Represses the expression of genes involved in neural development and preferentially binds palindromic sequence 5'-CCAATTGG-3' to mediate transcriptional repression. Acts as a corepressor for suppressor of hairless (Su(H)) and inhibits Notch signaling during peripheral nervous system development. The sequence is that of Protein insensitive (insv) from Drosophila melanogaster (Fruit fly).